Here is a 1530-residue protein sequence, read N- to C-terminus: Neurexin-1 (1530 aa).

Residues 1–30 (MGTALVQHGGCCLLCLSLLLLGCWAELGSG) form the signal peptide. In terms of domain architecture, Laminin G-like 1 spans 31-217 (LEFPGAEGQW…PPNSGGGSPC (187 aa)). Topologically, residues 31-1454 (LEFPGAEGQW…EVIRESSSTT (1424 aa)) are extracellular. 2 N-linked (GlcNAc...) asparagine glycosylation sites follow: asparagine 125 and asparagine 190. The segment at 196 to 219 (PVDGSEVKLDEEPPNSGGGSPCEA) is disordered. Positions 213–255 (GGSPCEAGDEGDGGVCLNGGVCSVVDDQAVCDCSRTGFRGKDC) constitute an EGF-like 1 domain. Disulfide bonds link cysteine 228–cysteine 243 and cysteine 245–cysteine 255. Laminin G-like domains lie at 299-496 (IATF…AFKC) and 503-695 (DPIT…KPSC). Positions 345, 362, and 430 each coordinate Ca(2+). 5 disulfide bridges follow: cysteine 460–cysteine 496, cysteine 666–cysteine 695, cysteine 703–cysteine 714, cysteine 708–cysteine 723, and cysteine 725–cysteine 735. In terms of domain architecture, EGF-like 2 spans 699–736 (TAKPCLSNPCKNNGMCRDGWNRYVCDCSGTGYLGRSCE). Laminin G-like domains are found at residues 741-914 (VLSY…IDYC) and 928-1103 (DPVT…ERGC). Ca(2+) is bound by residues aspartate 788 and leucine 805. A glycan (N-linked (GlcNAc...) asparagine) is linked at asparagine 813. Arginine 864 is a Ca(2+) binding site. Cystine bridges form between cysteine 906-cysteine 914, cysteine 1075-cysteine 1103, cysteine 1110-cysteine 1121, cysteine 1115-cysteine 1130, and cysteine 1132-cysteine 1142. Residues 1106-1143 (PSTTCQEDSCSNQGVCLQQWDGFSCDCSMTSFSGPLCN) form the EGF-like 3 domain. In terms of domain architecture, Laminin G-like 6 spans 1149–1347 (YIFSKGGGQI…DANIAIVGNV (199 aa)). 2 residues coordinate Ca(2+): aspartate 1199 and valine 1216. Asparagine 1246 carries N-linked (GlcNAc...) asparagine glycosylation. Residues isoleucine 1298 and asparagine 1300 each contribute to the Ca(2+) site. Serine 1408 carries O-linked (Xyl...) (heparan sulfate) serine glycosylation. The disordered stretch occupies residues 1412 to 1443 (PSDDEDIDPCEPSSGGLANPTRVGGREPYPGS). Residues 1455-1475 (GMVVGIVAAAALCILILLYAM) form a helical membrane-spanning segment. Residues 1476–1530 (YKYRNRDEGSYHVDESRNYISNSAQSNGAVVKEKQPSSAKSANKNKKNKDKEYYV) lie on the Cytoplasmic side of the membrane. The tract at residues 1497–1523 (NSAQSNGAVVKEKQPSSAKSANKNKKN) is interaction with CASK. The tract at residues 1497–1530 (NSAQSNGAVVKEKQPSSAKSANKNKKNKDKEYYV) is disordered.

It belongs to the neurexin family. In terms of assembly, interacts (via laminin G-like domain 2 and/or laminin G-like domain 6) with NLGN1 forming a heterotetramer, where one NLGN1 dimer interacts with one NRXN1 dimer. Also interacts (via laminin G-like domain 2 and/or laminin G-like domain 6) with NLGN2, NLGN3 and NLGN4L; interactions with NLGN1, NLGN2, NLGN3 and NLGN4L are calcium-dependent. Interacts (via cytoplasmic C-terminal region) with CASK (via the PDZ, SH3 and guanylate kinase-like domains). Interacts (via cytoplasmic C-terminus) with CASKIN1 and APBA1. Interacts (via laminin G-like domain 2) with NXPH1 and NXPH3. Alpha-type isoforms (neurexin-1-alpha) interact (via laminin G-like domain 2 and/or laminin G-like domain 6) with DAG1 (via alpha-dystroglycan chain). Interacts with LRRTM1, LRRTM2, LRRTM3 and LRRTM4. Interacts with SYT13 and SYTL1. Interacts with CBLN1, CBLN2 and, less avidly, with CBLN4. Interacts with CLSTN3. Alpha-type isoforms interact with alpha-latrotoxin from spider venom. O-glycosylated; contains heparan sulfate. Heparan sulfate attachment is required for synapse development by mediating interactions with neuroligins and LRRTM2. In terms of tissue distribution, brain (neuronal synapse).

It localises to the presynaptic cell membrane. Cell surface protein involved in cell-cell-interactions, exocytosis of secretory granules and regulation of signal transmission. Function is isoform-specific. Alpha-type isoforms have a long N-terminus with six laminin G-like domains and play an important role in synaptic signal transmission. Alpha-type isoforms play a role in the regulation of calcium channel activity and Ca(2+)-triggered neurotransmitter release at synapses and at neuromuscular junctions. They play an important role in Ca(2+)-triggered exocytosis of secretory granules in pituitary gland. They may affect their functions at synapses and in endocrine cells via their interactions with proteins from the exocytotic machinery. Likewise, alpha-type isoforms play a role in regulating the activity of postsynaptic NMDA receptors, a subtype of glutamate-gated ion channels. Both alpha-type and beta-type isoforms may play a role in the formation or maintenance of synaptic junctions via their interactions (via the extracellular domains) with neuroligin family members, CBLN1 or CBLN2. In vitro, triggers the de novo formation of presynaptic structures. May be involved in specification of excitatory synapses. Alpha-type isoforms were first identified as receptors for alpha-latrotoxin from spider venom. This chain is Neurexin-1 (Nrxn1), found in Rattus norvegicus (Rat).